We begin with the raw amino-acid sequence, 315 residues long: Phosphomutase-like protein 3 (315 aa).

The N-terminal stretch at 1–19 (MQQFLTLGALWTLFNVATT) is a signal peptide. H77 (tele-phosphohistidine intermediate) is an active-site residue. N-linked (GlcNAc...) asparagine glycans are attached at residues N88 and N154. The Proton donor/acceptor role is filled by E173. N185 is a glycosylation site (N-linked (GlcNAc...) asparagine). N286 carries the GPI-anchor amidated asparagine lipid modification. Residues 287–315 (DAWDTFKDWCPNPPASISGTATSTATGSA) constitute a propeptide, removed in mature form.

This sequence belongs to the phosphoglycerate mutase family.

The protein resides in the cell membrane. This Candida albicans (strain SC5314 / ATCC MYA-2876) (Yeast) protein is Phosphomutase-like protein 3 (PGA12).